Reading from the N-terminus, the 264-residue chain is Zearalenone hydrolase (264 aa).

Residues 27–207 (VLVPDGLGEC…KDLEALRGKP (181 aa)) form the AB hydrolase-1 domain. Zearalenone-binding residues include G32, S102, and S103. S102 is a catalytic residue. E126 is an active-site residue. Positions 183, 187, 220, and 242 each coordinate zearalenone. H242 is a catalytic residue.

This sequence belongs to the AB hydrolase superfamily. Hydrolase RutD family. As to quaternary structure, homodimer.

The catalysed reaction is zearalenone + H2O = hydrolyzed zearalenone + H(+). Lactonohydrolase that specifically hydrolyzes and deactivates the mycotoxin zearalenone (ZEN) and its zearalenol (ZOL) derivatives. ZHD101 prefers ZEN to ZOL as its substrate, but ZOL, especially the alpha-form, shows higher estrogenic toxicity than ZEN. This is Zearalenone hydrolase from Bionectria ochroleuca (Gliocladium roseum).